The sequence spans 229 residues: ATP synthase subunit a (229 aa).

6 helical membrane passes run 25 to 45 (ADAI…SLIA), 86 to 106 (IATL…PGFF), 111 to 131 (NLNT…IVGI), 142 to 162 (FMGP…IGHL), 181 to 201 (LVLM…MMLM), and 202 to 222 (GVLV…IYIQ).

It belongs to the ATPase A chain family. F-type ATPases have 2 components, CF(1) - the catalytic core - and CF(0) - the membrane proton channel. CF(1) has five subunits: alpha(3), beta(3), gamma(1), delta(1), epsilon(1). CF(0) has three main subunits: a(1), b(2) and c(9-12). The alpha and beta chains form an alternating ring which encloses part of the gamma chain. CF(1) is attached to CF(0) by a central stalk formed by the gamma and epsilon chains, while a peripheral stalk is formed by the delta and b chains.

The protein localises to the cell inner membrane. Its function is as follows. Key component of the proton channel; it plays a direct role in the translocation of protons across the membrane. This chain is ATP synthase subunit a, found in Geobacter sulfurreducens (strain ATCC 51573 / DSM 12127 / PCA).